The following is a 499-amino-acid chain: Dual specificity protein kinase CLK2 (499 aa).

The tract at residues 1 to 65 (MPHPRRYHSS…RSSYDDHSSD (65 aa)) is disordered. Over residues 8 to 23 (HSSERGSRGSYHEHYQ) the composition is skewed to basic and acidic residues. Residues 24–33 (SRKHKRRRSR) are compositionally biased toward basic residues. S34 is modified (phosphoserine; by PKB/AKT1). The segment covering 47 to 65 (REDSYHVRSRSSYDDHSSD) has biased composition (basic and acidic residues). Position 98 is a phosphoserine; by autocatalysis (S98). Position 99 is a phosphotyrosine; by autocatalysis (Y99). The disordered stretch occupies residues 102 to 142 (HRENSSYRSQRSSRRKHRRRRRRSRTFSRSSSHSSRRAKSV). Positions 112–127 (RSSRRKHRRRRRRSRT) are enriched in basic residues. T127 bears the Phosphothreonine; by PKB/AKT1 mark. S141 carries the phosphoserine; by autocatalysis modification. Position 152 is a phosphotyrosine (Y152). Positions 163-479 (EIVSTLGEGT…GEALQHPFFA (317 aa)) constitute a Protein kinase domain. Residues 168–176 (LGEGTFGRV) and K192 each bind ATP. The active-site Proton acceptor is D289. At T343 the chain carries Phosphothreonine; by PKB/AKT2.

It belongs to the protein kinase superfamily. CMGC Ser/Thr protein kinase family. Lammer subfamily. As to quaternary structure, interacts with RBMX and UBL5. Interacts with AKT1. Post-translationally, autophosphorylates on all three types of residues. Phosphorylation on Ser-34 and Thr-127 by AKT1 is induced by ionizing radiation or insulin. Phosphorylation plays a critical role in cell proliferation following low dose radiation and prevents cell death following high dose radiation. Phosphorylation at Thr-343 by PKB/AKT2 induces its kinase activity which is required for its stability. The phosphorylation status at Ser-141 influences its subnuclear localization; inhibition of phosphorylation at Ser-141 results in accumulation in the nuclear speckle.

Its subcellular location is the nucleus. The protein resides in the nucleus speckle. The catalysed reaction is L-seryl-[protein] + ATP = O-phospho-L-seryl-[protein] + ADP + H(+). It carries out the reaction L-threonyl-[protein] + ATP = O-phospho-L-threonyl-[protein] + ADP + H(+). It catalyses the reaction L-tyrosyl-[protein] + ATP = O-phospho-L-tyrosyl-[protein] + ADP + H(+). Its activity is regulated as follows. 5,6-dichloro-1-b-D-ribofuranosylbenzimidazole (DRB) inhibits autophosphorylation. TG003 inhibits its kinase activity and affects the regulation of alternative splicing mediated by phosphorylation of SR proteins. Dual specificity kinase acting on both serine/threonine and tyrosine-containing substrates. Phosphorylates serine- and arginine-rich (SR) proteins of the spliceosomal complex. May be a constituent of a network of regulatory mechanisms that enable SR proteins to control RNA splicing and can cause redistribution of SR proteins from speckles to a diffuse nucleoplasmic distribution. Acts as a suppressor of hepatic gluconeogenesis and glucose output by repressing PPARGC1A transcriptional activity on gluconeogenic genes via its phosphorylation. Phosphorylates PPP2R5B thereby stimulating the assembly of PP2A phosphatase with the PPP2R5B-AKT1 complex leading to dephosphorylation of AKT1. Phosphorylates: PTPN1, SRSF1 and SRSF3. Regulates the alternative splicing of tissue factor (F3) pre-mRNA in endothelial cells. Phosphorylates PAGE4 at several serine and threonine residues and this phosphorylation attenuates the ability of PAGE4 to potentiate the transcriptional activator activity of JUN. This Mus musculus (Mouse) protein is Dual specificity protein kinase CLK2 (Clk2).